A 339-amino-acid polypeptide reads, in one-letter code: Glycerol-3-phosphate dehydrogenase [NAD(P)+] (339 aa).

NADPH-binding residues include S15, Y16, H36, and K110. Residues K110, G139, and T141 each coordinate sn-glycerol 3-phosphate. Position 143 (A143) interacts with NADPH. Sn-glycerol 3-phosphate is bound by residues K195, D248, S258, R259, and N260. The Proton acceptor role is filled by K195. R259 is an NADPH binding site. 2 residues coordinate NADPH: V283 and E285.

This sequence belongs to the NAD-dependent glycerol-3-phosphate dehydrogenase family.

The protein localises to the cytoplasm. It carries out the reaction sn-glycerol 3-phosphate + NAD(+) = dihydroxyacetone phosphate + NADH + H(+). The catalysed reaction is sn-glycerol 3-phosphate + NADP(+) = dihydroxyacetone phosphate + NADPH + H(+). The protein operates within membrane lipid metabolism; glycerophospholipid metabolism. Functionally, catalyzes the reduction of the glycolytic intermediate dihydroxyacetone phosphate (DHAP) to sn-glycerol 3-phosphate (G3P), the key precursor for phospholipid synthesis. In Shigella flexneri serotype 5b (strain 8401), this protein is Glycerol-3-phosphate dehydrogenase [NAD(P)+].